Here is a 267-residue protein sequence, read N- to C-terminus: Mediator of RNA polymerase II transcription subunit 8 (267 aa).

Coiled-coil stretches lie at residues 1-26 and 116-160; these read MQRE…KNSL and DVEE…EERE. The disordered stretch occupies residues 190-267; the sequence is GLSNRRPPGQ…KSASMHPYQR (78 aa). Polar residues predominate over residues 227–245; sequence PPNQQQQHMAGVSMSQGSQ.

The protein belongs to the Mediator complex subunit 8 family. In terms of assembly, component of the Mediator complex. May be part of a multisubunit E3 ubiquitin-protein ligase complex.

It localises to the nucleus. Its pathway is protein modification; protein ubiquitination. Functionally, component of the Mediator complex, a coactivator involved in the regulated transcription of nearly all RNA polymerase II-dependent genes. Mediator functions as a bridge to convey information from gene-specific regulatory proteins to the basal RNA polymerase II transcription machinery. Mediator is recruited to promoters by direct interactions with regulatory proteins and serves as a scaffold for the assembly of a functional preinitiation complex with RNA polymerase II and the general transcription factors. May play a role as a target recruitment subunit in E3 ubiquitin-protein ligase complexes and thus in ubiquitination and subsequent proteasomal degradation of target proteins. This Xenopus tropicalis (Western clawed frog) protein is Mediator of RNA polymerase II transcription subunit 8 (med8).